The chain runs to 314 residues: Olfactory receptor 1E5 (314 aa).

The Extracellular portion of the chain corresponds to 1-25 (MMGQNQTSISDFLLLGLPIQPEQQN). The N-linked (GlcNAc...) asparagine glycan is linked to N5. A helical transmembrane segment spans residues 26–49 (LCYALFLAMYLTTLLGNLLIIVLI). Over 50–57 (RLDSHLHT) the chain is Cytoplasmic. Residues 58–79 (PMYLFLSNLSFSDLCFSSVTIP) form a helical membrane-spanning segment. Topologically, residues 80–100 (KLLQNMQNQDPSIPYADCLTQ) are extracellular. The cysteines at positions 97 and 189 are disulfide-linked. Residues 101–120 (MYFFLLFGDLESFLLVAMAY) traverse the membrane as a helical segment. Topologically, residues 121-139 (DRYVAICFPLHYTAIMSPM) are cytoplasmic. Residues 140 to 158 (LCLSLVALSWVLTTFHAML) form a helical membrane-spanning segment. At 159–196 (HTLLMARLCFCADNVIPHFFCDMSALLKLACSDTRVNE) the chain is on the extracellular side. The chain crosses the membrane as a helical span at residues 197 to 219 (WVIFIMGGLIVVIPFLLILGSYA). The Cytoplasmic portion of the chain corresponds to 220–236 (RIVSSILKVPSSKGICK). A helical transmembrane segment spans residues 237–260 (AFSTCGSHLSVVSLFYGTIIGLYL). Topologically, residues 261–272 (CPSANSSTLKET) are extracellular. N265 carries an N-linked (GlcNAc...) asparagine glycan. The chain crosses the membrane as a helical span at residues 273 to 292 (VMAMMYTVVTPMLNPFIYSL). Topologically, residues 293–314 (RNRDMKGALERVIXKRKNPFLL) are cytoplasmic.

This sequence belongs to the G-protein coupled receptor 1 family.

The protein resides in the cell membrane. Functionally, odorant receptor. The polypeptide is Olfactory receptor 1E5 (OR1E5) (Pan troglodytes (Chimpanzee)).